The primary structure comprises 501 residues: ATP synthase subunit alpha (501 aa).

169-176 (GDRQTGKT) contributes to the ATP binding site.

This sequence belongs to the ATPase alpha/beta chains family. As to quaternary structure, F-type ATPases have 2 components, CF(1) - the catalytic core - and CF(0) - the membrane proton channel. CF(1) has five subunits: alpha(3), beta(3), gamma(1), delta(1), epsilon(1). CF(0) has three main subunits: a(1), b(2) and c(9-12). The alpha and beta chains form an alternating ring which encloses part of the gamma chain. CF(1) is attached to CF(0) by a central stalk formed by the gamma and epsilon chains, while a peripheral stalk is formed by the delta and b chains.

Its subcellular location is the cell membrane. It carries out the reaction ATP + H2O + 4 H(+)(in) = ADP + phosphate + 5 H(+)(out). Produces ATP from ADP in the presence of a proton gradient across the membrane. The alpha chain is a regulatory subunit. The sequence is that of ATP synthase subunit alpha from Streptococcus pneumoniae serotype 4 (strain ATCC BAA-334 / TIGR4).